Consider the following 552-residue polypeptide: Low-affinity Fe(2+) transport protein (552 aa).

Over 1–97 the chain is Extracellular; sequence MGKIAEFLGN…DFLVRVAGSQ (97 aa). A Glycyl lysine isopeptide (Lys-Gly) (interchain with G-Cter in ubiquitin) cross-link involves residue Lys-39. A phosphoserine mark is found at Ser-48 and Ser-50. A helical membrane pass occupies residues 98–118; sequence AVFFIVWIILIIWVVIGIVYN. The Cytoplasmic portion of the chain corresponds to 119 to 225; it reads APFNWQVVMQ…SNVASRYMGS (107 aa). The chain crosses the membrane as a helical span at residues 226 to 246; sequence IAAMVIFWIGIFVWIGCGAIP. The Extracellular portion of the chain corresponds to 247-271; the sequence is KDAGNTPPYTGETTGSNPRLKKFSD. The helical transmembrane segment at 272–292 threads the bilayer; sequence AWQMYINTAVAVSLLICTTFL. Residues 293–354 lie on the Cytoplasmic side of the membrane; the sequence is QNIRARHDYF…GRKMIDWYAD (62 aa). Residues 355-375 traverse the membrane as a helical segment; the sequence is IIGTGIGVLIGVAVFATWIGI. Residues 376–383 lie on the Extracellular side of the membrane; that stretch reads GSPMKWDD. Residues 384 to 404 form a helical membrane-spanning segment; it reads NWWLIIGTYTGLIGFLDGFVL. Over 405–465 the chain is Cytoplasmic; the sequence is REVYFRIVQH…SQYINRICST (61 aa). Residues 466 to 486 traverse the membrane as a helical segment; it reads PWSVLVSVIIIIGLICIASGL. Residues 487 to 493 lie on the Extracellular side of the membrane; sequence RWSTTGQ. The helical transmembrane segment at 494-514 threads the bilayer; the sequence is LIANTPTMIIEEFFLLVLLQA. The Cytoplasmic segment spans residues 515-552; the sequence is HNWADRQRRVEVTALYARRRILLSYVEKRFPEVMMLEK.

This sequence belongs to the FET4 family.

The protein localises to the membrane. Required for Fe(2+) ion low affinity uptake. In Saccharomyces cerevisiae (strain ATCC 204508 / S288c) (Baker's yeast), this protein is Low-affinity Fe(2+) transport protein (FET4).